The following is a 296-amino-acid chain: Nucleotide-binding protein SEQ_0857 (296 aa).

13 to 20 (GMSGAGKT) serves as a coordination point for ATP. 63-66 (DMRS) lines the GTP pocket.

Belongs to the RapZ-like family.

In terms of biological role, displays ATPase and GTPase activities. This chain is Nucleotide-binding protein SEQ_0857, found in Streptococcus equi subsp. equi (strain 4047).